A 186-amino-acid polypeptide reads, in one-letter code: Methyl-CpG-binding domain protein 3-like 1 (186 aa).

Residues 1–104 (MGKTSQRKQC…TSTDTVASAS (104 aa)) form a transcription repressor region.

This sequence belongs to the MBD3L family. As to expression, highly expressed in testis. Not detected in the other tissues tested.

It localises to the nucleus. In terms of biological role, transcriptional repressor. This chain is Methyl-CpG-binding domain protein 3-like 1 (Mbd3l1), found in Mus musculus (Mouse).